The sequence spans 489 residues: Glycogen synthase (489 aa).

Lys18 provides a ligand contact to ADP-alpha-D-glucose.

Belongs to the glycosyltransferase 1 family. Bacterial/plant glycogen synthase subfamily.

It carries out the reaction [(1-&gt;4)-alpha-D-glucosyl](n) + ADP-alpha-D-glucose = [(1-&gt;4)-alpha-D-glucosyl](n+1) + ADP + H(+). The protein operates within glycan biosynthesis; glycogen biosynthesis. In terms of biological role, synthesizes alpha-1,4-glucan chains using ADP-glucose. The protein is Glycogen synthase of Rhodopseudomonas palustris (strain BisA53).